The following is a 61-amino-acid chain: Small ribosomal subunit protein uS14 (61 aa).

4 residues coordinate Zn(2+): Cys-24, Cys-27, Cys-40, and Cys-43.

This sequence belongs to the universal ribosomal protein uS14 family. Zinc-binding uS14 subfamily. Part of the 30S ribosomal subunit. Contacts proteins S3 and S10. Requires Zn(2+) as cofactor.

Its function is as follows. Binds 16S rRNA, required for the assembly of 30S particles and may also be responsible for determining the conformation of the 16S rRNA at the A site. In Halalkalibacterium halodurans (strain ATCC BAA-125 / DSM 18197 / FERM 7344 / JCM 9153 / C-125) (Bacillus halodurans), this protein is Small ribosomal subunit protein uS14.